A 497-amino-acid polypeptide reads, in one-letter code: uncharacterized protein (497 aa).

Helical transmembrane passes span 91–111 (WVGT…STLL), 119–139 (VTSA…LVHS), 149–169 (LLGI…AQWY), 179–199 (AFLV…SYGL), 215–235 (ILFI…FIHI), 283–303 (MYLY…LSNF), 319–339 (LLMN…FGLI), 347–367 (MDIA…IAFA), 374–394 (LAGY…LSCI), 406–426 (FMSA…PQTF), and 439–459 (VSFV…YAVN).

It belongs to the major facilitator superfamily. Allantoate permease family.

The protein resides in the golgi apparatus. Its subcellular location is the membrane. This is an uncharacterized protein from Schizosaccharomyces pombe (strain 972 / ATCC 24843) (Fission yeast).